Consider the following 92-residue polypeptide: Putative membrane protein insertion efficiency factor (92 aa).

The protein belongs to the UPF0161 family.

Its subcellular location is the cell membrane. Functionally, could be involved in insertion of integral membrane proteins into the membrane. In Tropheryma whipplei (strain TW08/27) (Whipple's bacillus), this protein is Putative membrane protein insertion efficiency factor.